Here is a 324-residue protein sequence, read N- to C-terminus: MYG1 protein C694.04c (324 aa).

Belongs to the MYG1 family.

This is MYG1 protein C694.04c from Schizosaccharomyces pombe (strain 972 / ATCC 24843) (Fission yeast).